A 611-amino-acid chain; its full sequence is Alkyldihydroxyacetonephosphate synthase (611 aa).

Residues 137-317 (VKNAPDLIVL…TEAVMKVHAV (181 aa)) form the FAD-binding PCMH-type domain. Residues 169-175 (PMGGGSN), 237-243 (DSFEFST), 250-255 (TCSSGH), and 301-307 (EGTLGII) each bind FAD. Arginine 447 is a binding site for substrate. Tyrosine 508 serves as the catalytic Proton donor/acceptor. Residues 544–546 (HHH) are important for enzyme activity. Positions 609–611 (PKL) match the Microbody targeting signal motif.

The protein belongs to the FAD-binding oxidoreductase/transferase type 4 family. As to quaternary structure, homodimer. The cofactor is FAD.

It is found in the peroxisome. The enzyme catalyses a long chain fatty alcohol + a 1-acylglycerone 3-phosphate = a 1-O-alkylglycerone 3-phosphate + a long-chain fatty acid + H(+). The protein operates within glycerolipid metabolism; ether lipid biosynthesis. Its function is as follows. Catalyzes the exchange of an acyl for a long-chain alkyl group and the formation of the ether bond in the biosynthesis of ether phospholipids. In Dictyostelium discoideum (Social amoeba), this protein is Alkyldihydroxyacetonephosphate synthase (eapA).